We begin with the raw amino-acid sequence, 346 residues long: Biotin synthase (346 aa).

Residues 38 to 256 form the Radical SAM core domain; it reads RQVQVSTLLS…IAVARIMMPT (219 aa). 3 residues coordinate [4Fe-4S] cluster: C53, C57, and C60. Residues C97, C128, C188, and R260 each contribute to the [2Fe-2S] cluster site.

This sequence belongs to the radical SAM superfamily. Biotin synthase family. Homodimer. Requires [4Fe-4S] cluster as cofactor. [2Fe-2S] cluster serves as cofactor.

It carries out the reaction (4R,5S)-dethiobiotin + (sulfur carrier)-SH + 2 reduced [2Fe-2S]-[ferredoxin] + 2 S-adenosyl-L-methionine = (sulfur carrier)-H + biotin + 2 5'-deoxyadenosine + 2 L-methionine + 2 oxidized [2Fe-2S]-[ferredoxin]. It participates in cofactor biosynthesis; biotin biosynthesis; biotin from 7,8-diaminononanoate: step 2/2. Its function is as follows. Catalyzes the conversion of dethiobiotin (DTB) to biotin by the insertion of a sulfur atom into dethiobiotin via a radical-based mechanism. This Pseudescherichia vulneris (Escherichia vulneris) protein is Biotin synthase.